The following is an 873-amino-acid chain: Zinc finger X-linked protein ZXDB (873 aa).

5 disordered regions span residues 1–23 (MEIPRLLPARGTPQGAGGGGCPA), 48–120 (RGAQ…GGSR), 138–184 (VETV…LSAV), 240–259 (EPGVAPFPQPQPPPQPGALI), and 301–330 (AEPAACPAPPEEEAEAPAAAAAQSPRGPAG). 2 stretches are compositionally biased toward gly residues: residues 14–23 (QGAGGGGCPA) and 85–120 (SGGGRGGGAGGGGGGSGGGGGGGGGGGGGGGGGGSR). Arginine 89 is modified (omega-N-methylarginine). A compositionally biased stretch (basic and acidic residues) spans 150–165 (VRREEAGAGPRPERRQ). The span at 240–255 (EPGVAPFPQPQPPPQP) shows a compositional bias: pro residues. Over residues 316–327 (APAAAAAQSPRG) the composition is skewed to low complexity. 10 C2H2-type zinc fingers span residues 340–364 (YLCPEAQCGQTFAKKHQLKVHLLTH), 373–397 (FKCPLSGCGWTFTTSYKLKRHLQSH), 403–427 (FGCPVQGCGKSFTTVYNLKAHMKGH), 433–455 (FKCEVCEESFPTQAKLSTHQRSH), 462–486 (YQCAFSGCKKTFITVSALFSHNRAH), 493–517 (FACSFPGCSKQYDKACRLKIHLRSH), 523–547 (FLCDFDGCGWNFTSMSKLLRHKRKH), 553–577 (FTCPVEGCGKSFTRAEHLKGHSITH), 583–607 (FVCPVEGCCARFSARSSLYIHSKKH), and 616–641 (SRCPVPTCNKLFTSKHSMKTHMTKRH). The required for interaction with ZXDC stretch occupies residues 340–646 (YLCPEAQCGQ…MTKRHNLSQD (307 aa)). Positions 645–776 (QDLLAQLEAA…DMDDVSAGNV (132 aa)) are required for transcriptional activation.

Belongs to the ZXD family. In terms of assembly, self-associates. Interacts with ZXDC and CIITA.

It localises to the nucleus. Its function is as follows. Cooperates with CIITA to promote transcription of MHC class I and MHC class II genes. The protein is Zinc finger X-linked protein ZXDB (Zxdb) of Mus musculus (Mouse).